Reading from the N-terminus, the 741-residue chain is DNA ligase (741 aa).

NAD(+)-binding positions include 78–82 (DADYD), 127–128 (SL), and glutamate 161. The N6-AMP-lysine intermediate role is filled by lysine 163. Arginine 184, glutamate 219, lysine 335, and lysine 359 together coordinate NAD(+). Zn(2+) contacts are provided by cysteine 464, cysteine 467, cysteine 482, and cysteine 488. Positions 662–741 (VGDSPVAGKT…DAWRVLAGLA (80 aa)) constitute a BRCT domain.

This sequence belongs to the NAD-dependent DNA ligase family. LigA subfamily. It depends on Mg(2+) as a cofactor. Mn(2+) is required as a cofactor.

The catalysed reaction is NAD(+) + (deoxyribonucleotide)n-3'-hydroxyl + 5'-phospho-(deoxyribonucleotide)m = (deoxyribonucleotide)n+m + AMP + beta-nicotinamide D-nucleotide.. DNA ligase that catalyzes the formation of phosphodiester linkages between 5'-phosphoryl and 3'-hydroxyl groups in double-stranded DNA using NAD as a coenzyme and as the energy source for the reaction. It is essential for DNA replication and repair of damaged DNA. In Dinoroseobacter shibae (strain DSM 16493 / NCIMB 14021 / DFL 12), this protein is DNA ligase.